A 267-amino-acid chain; its full sequence is Mitochondrial S-adenosylmethionine carrier protein (267 aa).

Solcar repeat units lie at residues 4-77 (REFT…TKSV), 86-168 (LAPI…LKAV), and 177-265 (LDSW…VRRT). The next 6 membrane-spanning stretches (helical) occupy residues 5–25 (EFTA…LTLF), 49–69 (IYAG…AFFV), 85–105 (NLAP…ACLI), 142–162 (RGYG…FPLW), 182–202 (AAVC…PLDV), and 238–258 (FAGS…FLGA).

This sequence belongs to the mitochondrial carrier (TC 2.A.29) family.

It is found in the mitochondrion inner membrane. The catalysed reaction is S-adenosyl-L-homocysteine(out) + S-adenosyl-L-methionine(in) = S-adenosyl-L-homocysteine(in) + S-adenosyl-L-methionine(out). Functionally, mitochondrial S-adenosyl-L-methionine/S-adenosyl-L-homocysteine antiporter. Mediates the exchange of cytosolic S-adenosyl-L-methionine, the predominant methyl-group donor for macromolecule methylation processes, for mitochondrial S-adenosylhomocysteine(SAH), a by-product of methylation reactions. The protein is Mitochondrial S-adenosylmethionine carrier protein (slc25a26) of Danio rerio (Zebrafish).